A 545-amino-acid chain; its full sequence is Eukaryotic translation initiation factor 3 subunit D-2 (545 aa).

The disordered stretch occupies residues 94–148 (FQRGRFRGNTRNNPRTRGRTGRGGAVTGTGGNQPGVGVNERTKYGKGRDNRRQMG). Over residues 95 to 113 (QRGRFRGNTRNNPRTRGRT) the composition is skewed to basic residues. Residues 114–127 (GRGGAVTGTGGNQP) show a composition bias toward gly residues. Positions 133–145 (ERTKYGKGRDNRR) are enriched in basic and acidic residues. Residues 287–301 (QFDLLTVNETALEPP) are RNA gate.

Belongs to the eIF-3 subunit D family. In terms of assembly, component of the eukaryotic translation initiation factor 3 (eIF-3) complex. The eIF-3 complex interacts with pix.

It is found in the cytoplasm. MRNA cap-binding component of the eukaryotic translation initiation factor 3 (eIF-3) complex, which is involved in protein synthesis of a specialized repertoire of mRNAs and, together with other initiation factors, stimulates binding of mRNA and methionyl-tRNAi to the 40S ribosome. The eIF-3 complex specifically targets and initiates translation of a subset of mRNAs involved in cell proliferation. In the eIF-3 complex, eif3d specifically recognizes and binds the 7-methylguanosine cap of a subset of mRNAs. The protein is Eukaryotic translation initiation factor 3 subunit D-2 of Drosophila pseudoobscura pseudoobscura (Fruit fly).